Here is a 591-residue protein sequence, read N- to C-terminus: PDZ and LIM domain protein 5 (591 aa).

An N-acetylserine modification is found at Ser2. Phosphoserine is present on Ser2. Positions 2-85 (SNYSVSLVGP…SLNMTLQRAS (84 aa)) constitute a PDZ domain. N6-acetyllysine; alternate is present on Lys89. Lys89 is subject to N6-succinyllysine; alternate. A Glycyl lysine isopeptide (Lys-Gly) (interchain with G-Cter in SUMO2); alternate cross-link involves residue Lys89. Residues Glu102, Lys105, Ser111, Ser134, and Ser137 each carry the phosphoserine modification. Disordered stretches follow at residues 121–166 (TNMA…PTPV) and 186–398 (SADQ…DQDT). Residues 134–143 (SVSSPKVTSI) are compositionally biased toward polar residues. A compositionally biased stretch (low complexity) spans 144 to 166 (PSPSSAFTPAHAATSSHASPTPV). 2 stretches are compositionally biased toward polar residues: residues 186 to 195 (SADQCSSPPN) and 205 to 217 (RQPTVTSVCSESA). Gln218, Ser228, and Ser260 each carry phosphoserine. 2 stretches are compositionally biased toward basic and acidic residues: residues 258 to 273 (DASKKRLIEDTEDWRP) and 294 to 304 (HLTESENDNTK). Positions 310–339 (QEPSQQPASSGASPLSASEGPESPGSSRPS) are enriched in low complexity. 3 positions are modified to phosphoserine: Ser313, Pro316, and Ser322. An N6-acetyllysine modification is found at Lys350. A compositionally biased stretch (polar residues) spans 353-385 (GSTSVKSPSWQRPNQAAPSTGRISNNARSSGTG). Residues Ser359 and Ser361 each carry the phosphoserine modification. 3 LIM zinc-binding domains span residues 413 to 472 (PMCA…FFAP), 472 to 531 (PECG…LFGT), and 531 to 591 (TICR…SVNF).

In terms of assembly, interacts with various PKC isoforms through the LIM domains. Interacts with actin and alpha-actinin through the PDZ domain. Interacts (via LIM domains) with SIPA1L1/SPAR; this interaction may occur preferentially with isoform 1.

The protein localises to the postsynaptic density. It is found in the presynapse. It localises to the postsynapse. Its subcellular location is the cytoplasm. The protein resides in the cytosol. In terms of biological role, may play an important role in the heart development by scaffolding PKC to the Z-disk region. May play a role in the regulation of cardiomyocyte expansion. Isoforms lacking the LIM domains may negatively modulate the scaffolding activity of isoform 1. Overexpression promotes the development of heart hypertrophy. Contributes to the regulation of dendritic spine morphogenesis in neurons. May be required to restrain postsynaptic growth of excitatory synapses. Isoform 1, but not isoform 2, expression favors spine thinning and elongation. This Mus musculus (Mouse) protein is PDZ and LIM domain protein 5.